We begin with the raw amino-acid sequence, 546 residues long: Plastidic glucose transporter 4 (546 aa).

A run of 12 helical transmembrane segments spans residues V105–V125, W148–A168, I182–V202, L205–I225, L240–P260, T265–P285, V345–V365, V381–L401, L410–T430, L441–P461, A477–L497, and F503–I523.

This sequence belongs to the major facilitator superfamily. Sugar transporter (TC 2.A.1.1) family.

The protein resides in the plastid. The protein localises to the chloroplast inner membrane. In terms of biological role, may be involved in the efflux of glucose towards the cytosol. This is Plastidic glucose transporter 4 from Arabidopsis thaliana (Mouse-ear cress).